The primary structure comprises 510 residues: NAD(P)H-quinone oxidoreductase subunit 2, chloroplastic (510 aa).

A run of 12 helical transmembrane segments spans residues 24–44 (LLLF…GLIL), 59–79 (WFYF…LFRW), 99–119 (IFQF…VEYI), 124–144 (MAIT…MFLC), 149–169 (FITI…LSGY), 183–203 (YLLM…WLYG), 229–249 (ISIA…PAPF), 295–315 (WHLL…LIAI), 323–343 (MLAY…IVGD), 347–367 (GYAS…GTFA), 395–415 (ALSL…AGFF), and 418–438 (LHLF…IGLL).

Belongs to the complex I subunit 2 family. NDH is composed of at least 16 different subunits, 5 of which are encoded in the nucleus.

It localises to the plastid. It is found in the chloroplast thylakoid membrane. The catalysed reaction is a plastoquinone + NADH + (n+1) H(+)(in) = a plastoquinol + NAD(+) + n H(+)(out). It carries out the reaction a plastoquinone + NADPH + (n+1) H(+)(in) = a plastoquinol + NADP(+) + n H(+)(out). Its function is as follows. NDH shuttles electrons from NAD(P)H:plastoquinone, via FMN and iron-sulfur (Fe-S) centers, to quinones in the photosynthetic chain and possibly in a chloroplast respiratory chain. The immediate electron acceptor for the enzyme in this species is believed to be plastoquinone. Couples the redox reaction to proton translocation, and thus conserves the redox energy in a proton gradient. The protein is NAD(P)H-quinone oxidoreductase subunit 2, chloroplastic of Phormium tenax (New Zealand flax).